Reading from the N-terminus, the 802-residue chain is MSFNHQEIEKKWQGYWEENKTFRTPDETEKPKFYALDMFPYPSGAGLHVGHPEGYTATDILSRMKRMQGYNVLHPMGWDAFGLPAEQYALDTGNSPAEFTEHNINTFRNQIKSLGFSYDWDREVNTTDPNYYKWTQWIFLKLFEKGLAYVDEVPVNWCPALGTVLANEEIIDGKSERGGHPVERRPMRQWMLKITAYGDRLLEDLDELDWPESLKDMQRNWIGRSEGAEVHFNIDGTDEKFTVFTTRPDTLFGASYCVLAPEHALVADITTAEQKEAVEAYINSVKMKSDLERTELAKEKTGVFTGAYAVNPVNGEKLPIWIADYVLATYGTGAVMAVPAHDERDYEFASTFNLPMKEVVKGGDITKEAYTGDGEHVNSAFLDGLNKEEAIAKMIEWLEVTSAGNQKVTYRLRDWLFSRQRYWGEPIPVIHWEDGTMTAVKEEELPLVLPKTDNIRPSGTGESPLANIDEWVNVVDPETGKKGRRETNTMPQWAGSCWYYLRYIDPNNSEALVDPEKVKQWLPVDIYIGGAEHAVLHLLYARFWHKVLYDIGVVPTKEPFQQLFNQGMILGENNEKMSKSKGNVVNPDDIVASHGADTLRLYEMFMGPLDASIAWSENGLDGARRFLDRVWRLFVQDNGELSEKITDAPNKELEKAYHQTVKKVTEDYAELRFNTAISQMMVFINDAYKAETLPKEYVEGFVKMIAPVAPHIGEELWSKLGYNETITYASWPTFDESKLVEDEVEIVVQVMGKVRAKLTMSKDASKEEMEQLALEAIKDQIEGKTVRKVIVVPGKLVNVVAN.

Positions 40 to 51 (PYPSGAGLHVGH) match the 'HIGH' region motif. A 'KMSKS' region motif is present at residues 576–580 (KMSKS). Residue Lys-579 participates in ATP binding.

It belongs to the class-I aminoacyl-tRNA synthetase family.

It is found in the cytoplasm. It carries out the reaction tRNA(Leu) + L-leucine + ATP = L-leucyl-tRNA(Leu) + AMP + diphosphate. The protein is Leucine--tRNA ligase of Bacillus cereus (strain ATCC 10987 / NRS 248).